An 864-amino-acid polypeptide reads, in one-letter code: DNA mismatch repair protein MutS (864 aa).

ATP is bound at residue 607 to 614; it reads GPNMGGKS.

The protein belongs to the DNA mismatch repair MutS family.

In terms of biological role, this protein is involved in the repair of mismatches in DNA. It is possible that it carries out the mismatch recognition step. This protein has a weak ATPase activity. This is DNA mismatch repair protein MutS from Neisseria meningitidis serogroup C (strain 053442).